A 656-amino-acid polypeptide reads, in one-letter code: 1-deoxy-D-xylulose-5-phosphate synthase 1 (656 aa).

Residues H73 and S113–A115 each bind thiamine diphosphate. D144 is a Mg(2+) binding site. Residues G145 to A146, N174, Y285, and E367 contribute to the thiamine diphosphate site. N174 provides a ligand contact to Mg(2+). The interval A625–N656 is disordered.

Belongs to the transketolase family. DXPS subfamily. As to quaternary structure, homodimer. Mg(2+) serves as cofactor. The cofactor is thiamine diphosphate.

It catalyses the reaction D-glyceraldehyde 3-phosphate + pyruvate + H(+) = 1-deoxy-D-xylulose 5-phosphate + CO2. Its pathway is metabolic intermediate biosynthesis; 1-deoxy-D-xylulose 5-phosphate biosynthesis; 1-deoxy-D-xylulose 5-phosphate from D-glyceraldehyde 3-phosphate and pyruvate: step 1/1. In terms of biological role, catalyzes the acyloin condensation reaction between C atoms 2 and 3 of pyruvate and glyceraldehyde 3-phosphate to yield 1-deoxy-D-xylulose-5-phosphate (DXP). This chain is 1-deoxy-D-xylulose-5-phosphate synthase 1, found in Streptomyces coelicolor (strain ATCC BAA-471 / A3(2) / M145).